The following is a 70-amino-acid chain: Large ribosomal subunit protein uL29 (70 aa).

This sequence belongs to the universal ribosomal protein uL29 family.

This chain is Large ribosomal subunit protein uL29, found in Prochlorococcus marinus (strain NATL1A).